An 834-amino-acid polypeptide reads, in one-letter code: Sodium/hydrogen exchanger 3 (834 aa).

Positions 1–25 (MWGLGARGPDRGLLLALALGGLARA) are cleaved as a signal peptide. Residues 26-51 (GGVEVEPGGAHGESGGFQVVTFEWAH) lie on the Extracellular side of the membrane. The chain crosses the membrane as a helical span at residues 52-74 (VQDPYVIALWILVASLAKIGFHL). Topologically, residues 75–82 (SHKVTSVV) are cytoplasmic. The chain crosses the membrane as a helical span at residues 83–102 (PESALLIVLGLVLGGIVWAA). At 103–111 (DHIASFTLT) the chain is on the extracellular side. A helical transmembrane segment spans residues 112 to 129 (PTVFFFYLLPPIVLDAGY). Residues 130-132 (FMP) are Cytoplasmic-facing. Residues 133–168 (NRLFFGNLGTILLYAVVGTVWNAATTGLSLYGVFLS) form a helical membrane-spanning segment. A 1,2-diacyl-sn-glycero-3-phospho-(1D-myo-inositol) is bound by residues Gly138, Gly141, and Thr142. The Extracellular portion of the chain corresponds to 169–181 (GLMGDLQIGLLDF). The helical transmembrane segment at 182–203 (LLFGSLMAAVDPVAVLAVFEEV) threads the bilayer. The Cytoplasmic portion of the chain corresponds to 204 to 205 (HV). The chain crosses the membrane as a helical span at residues 206–237 (NEVLFIIVFGESLLNDAVTVVLYNVFESFVAL). Residues 238-244 (GGDNVTG) are Extracellular-facing. An N-linked (GlcNAc...) asparagine glycan is attached at Asn241. Residues 245–279 (VDCVKGIVSFFVVSLGGTLVGVVFAFLLSLVTRFT) traverse the membrane as a helical segment. Over 280–281 (KH) the chain is Cytoplasmic. Residues 282 to 304 (VRIIEPGFVFIISYLSYLTSEML) traverse the membrane as a helical segment. Topologically, residues 305 to 306 (SL) are extracellular. The helical transmembrane segment at 307–323 (SAILAITFCGICCQKYV) threads the bilayer. Topologically, residues 324–330 (KANISEQ) are cytoplasmic. A helical membrane pass occupies residues 331 to 359 (SATTVRYTMKMLASSAETIIFMFLGISAV). The Extracellular segment spans residues 360-367 (NPFIWTWN). The helical transmembrane segment at 368-389 (TAFVLLTLVFISVYRAIGVVLQ) threads the bilayer. Residues 390–402 (TWLLNRYRMVQLE) are Cytoplasmic-facing. Met398 contacts a 1,2-diacyl-sn-glycero-3-phospho-(1D-myo-inositol). A helical membrane pass occupies residues 403–426 (PIDQVVLSYGGLRGAVAFALVVLL). The Extracellular segment spans residues 427 to 433 (DGDKVKE). Residues 434–467 (KNLFVSTTIIVVFFTVIFQGLTIKPLVQWLKVKR) traverse the membrane as a helical segment. Residues 468-834 (SEHREPRLNE…PAALPESTHM (367 aa)) are Cytoplasmic-facing. A 1,2-diacyl-sn-glycero-3-phospho-(1D-myo-inositol)-binding residues include Gln497, Ile498, and His500. Residues Ser555 and Ser563 each carry the phosphoserine modification. The tract at residues 575 to 589 (RSSTVEASVSYLLRE) is interaction with EZR. Residues 590 to 667 (NVSAVCLDMQ…RKRLESFKST (78 aa)) are interaction with NHERF4. The interaction with AHCYL1 stretch occupies residues 591–695 (VSAVCLDMQS…AQKRRNSSIP (105 aa)). Phosphoserine is present on residues Ser592 and Ser607. Residue Ser663 is modified to Phosphoserine; by SGK1. Over residues 679-691 (KLYKRERAQKRRN) the composition is skewed to basic residues. A disordered region spans residues 679-728 (KLYKRERAQKRRNSSIPNGKLPMESPAQNFTIKEKDLELSDTEEPPNYDE). The segment covering 717–728 (LSDTEEPPNYDE) has biased composition (acidic residues). 3 positions are modified to phosphoserine: Ser718, Ser810, and Ser813. The tract at residues 814–834 (FLQADGPEERPPAALPESTHM) is disordered.

The protein belongs to the monovalent cation:proton antiporter 1 (CPA1) transporter (TC 2.A.36) family. In terms of assembly, homodimer. Found in the forms of complex and dynamic macromolecular complexes. Binds NHERF1 and NHERF2. Interacts with CHP1; increases SLC9A3 trafficking and activity at the plasma membrane. Interacts with CHP2 and SHANK2. Interacts with PDZK1 (via C-terminal PDZ domain). Interacts with NHERF4 and interaction decrease in response to elevated calcium ion levels. Interacts with AHCYL1; the interaction is required for SLC9A3 activity. Interacts with SNX27 (via PDZ domains); directs SLC9A3 membrane insertion from early endosomes to the plasma membrane. Interacts with EZR; interaction targets SLC9A3 to the apical membrane. Post-translationally, phosphorylated by PKA, which inhibits activity. Phosphorylation at Ser-663 by SGK1 is associated with increased abundance at the cell membrane. Phosphorylation at Ser-718 by CSNK2A1 regulates SLC9A3 activity through the formation of multiple signaling complexes.

It is found in the apical cell membrane. Its subcellular location is the cell membrane. The protein localises to the recycling endosome membrane. The protein resides in the early endosome membrane. It carries out the reaction Na(+)(in) + H(+)(out) = Na(+)(out) + H(+)(in). With respect to regulation, seems to switch between active and inactive modes in response to various stimuli. Activated directly or indirectly by membrane phosphatidylinositol (PIs). Regulated by a variety of auxiliary proteins, which facilitate the maturation, cell surface expression and function of the transporter. Inhibited specifically by the drug tenapanor. In terms of biological role, plasma membrane Na(+)/H(+) antiporter. Exchanges intracellular H(+) ions for extracellular Na(+) in 1:1 stoichiometry, playing a key role in salt and fluid absorption and pH homeostasis. Major apical Na(+)/H(+) exchanger in kidney and intestine playing an important role in renal and intestine Na(+) absorption and blood pressure regulation. This is Sodium/hydrogen exchanger 3 from Homo sapiens (Human).